The following is a 145-amino-acid chain: UPF0179 protein MmarC7_0952 (145 aa).

It belongs to the UPF0179 family.

In Methanococcus maripaludis (strain C7 / ATCC BAA-1331), this protein is UPF0179 protein MmarC7_0952.